We begin with the raw amino-acid sequence, 382 residues long: Galactokinase (382 aa).

Residue 34 to 37 participates in substrate binding; that stretch reads EHTD. 124-130 lines the ATP pocket; the sequence is GAGLSSS. Residues serine 130 and glutamate 162 each contribute to the Mg(2+) site. Aspartate 174 functions as the Proton acceptor in the catalytic mechanism. Residue tyrosine 223 coordinates substrate.

The protein belongs to the GHMP kinase family. GalK subfamily.

Its subcellular location is the cytoplasm. It catalyses the reaction alpha-D-galactose + ATP = alpha-D-galactose 1-phosphate + ADP + H(+). It functions in the pathway carbohydrate metabolism; galactose metabolism. Catalyzes the transfer of the gamma-phosphate of ATP to D-galactose to form alpha-D-galactose-1-phosphate (Gal-1-P). This Escherichia coli O9:H4 (strain HS) protein is Galactokinase.